The sequence spans 150 residues: Leukotriene C4 synthase (150 aa).

At 1-6 (MKDEVA) the chain is on the cytoplasmic side. A helical transmembrane segment spans residues 7-27 (LLATVTLVGVLLQAYFSLQVI). The Lumenal segment spans residues 28-48 (SARRAFHVSPPLTSGPPEFER). Arg-30 contributes to the glutathione binding site. The active-site Proton donor is Arg-31. Ser-36 is modified (phosphoserine). The chain crosses the membrane as a helical span at residues 49–69 (VFRAQVNCSEYFPLFLATLWV). Residues 51 to 55 (RAQVN), Gln-53, and 58 to 59 (EY) contribute to the glutathione site. At 70–73 (AGIF) the chain is on the cytoplasmic side. Residues 74–94 (FHEGAAALCGLFYLFARLRYF) traverse the membrane as a helical segment. 93 to 97 (YFQGY) is a binding site for glutathione. Over 95-104 (QGYARSAQLR) the chain is Lumenal. Arg-104 serves as the catalytic Proton acceptor. Residues 105–124 (LTPLYASARALWLLVAMAAL) form a helical membrane-spanning segment. The Cytoplasmic portion of the chain corresponds to 125–150 (GLLVHFLPGTLRTALFRWLQMLLPMA).

This sequence belongs to the MAPEG family. In terms of assembly, homotrimer. Interacts with ALOX5AP and ALOX5. Post-translationally, phosphorylation at Ser-36 by RPS6KB1 inhibits the leukotriene-C4 synthase activity. In terms of tissue distribution, widely expressed.

It localises to the nucleus outer membrane. Its subcellular location is the endoplasmic reticulum membrane. The protein localises to the nucleus membrane. The catalysed reaction is leukotriene C4 = leukotriene A4 + glutathione. It carries out the reaction (13S,14S)-epoxy-(4Z,7Z,9E,11E,16Z,19Z)-docosahexaenoate + glutathione = (13R)-S-glutathionyl-(14S)-hydroxy-(4Z,7Z,9E,11E,16Z,19Z)-docosahexaenoate. The protein operates within lipid metabolism; leukotriene C4 biosynthesis. Its activity is regulated as follows. Inhibited by MK886. In terms of biological role, catalyzes the conjugation of leukotriene A4 with reduced glutathione (GSH) to form leukotriene C4 with high specificity. Can also catalyze the transfer of a glutathionyl group from glutathione (GSH) to 13(S),14(S)-epoxy-docosahexaenoic acid to form maresin conjugate in tissue regeneration 1 (MCTR1), a bioactive lipid mediator that possess potent anti-inflammatory and proresolving actions. This is Leukotriene C4 synthase (Ltc4s) from Mus musculus (Mouse).